The sequence spans 204 residues: uncharacterized protein (204 aa).

The signal sequence occupies residues 1 to 24 (MPINTFCKISLFICALFCSTVTLA).

This is an uncharacterized protein from Pasteurella multocida (strain Pm70).